The sequence spans 199 residues: Recombination protein RecR (199 aa).

Residues 57–72 form a C4-type zinc finger; the sequence is CSICGNITEDDPCDIC. The region spanning 80 to 176 is the Toprim domain; the sequence is KAVLVVEDSK…KVTRLAHGLS (97 aa).

The protein belongs to the RecR family.

Its function is as follows. May play a role in DNA repair. It seems to be involved in an RecBC-independent recombinational process of DNA repair. It may act with RecF and RecO. This Pediococcus pentosaceus (strain ATCC 25745 / CCUG 21536 / LMG 10740 / 183-1w) protein is Recombination protein RecR.